The following is a 298-amino-acid chain: Protein pxr1 (298 aa).

Residues 1–11 are compositionally biased toward basic residues; the sequence is MGLAAPRKRTK. Residues 1–23 form a disordered region; sequence MGLAAPRKRTKISHDPNNTNWAR. The G-patch domain occupies 25-79; it reads TSGFGHKILSSQGWTPGSFLGARDAAHADMFTAASAGHIRVVVKDDTLGLGARAG. Positions 145–274 are disordered; sequence LPERESVQQS…RPLGRQIVRG (130 aa). Residues 151–164 are compositionally biased toward polar residues; that stretch reads VQQSRAAVETSDSN. Basic residues predominate over residues 199-222; that stretch reads REKKEKKDKKEKKEKKDKKDKKRK. Residues 247–256 show a composition bias toward polar residues; it reads GLESDSTSVS.

It belongs to the PINX1 family.

The protein resides in the nucleus. Its subcellular location is the nucleolus. Its function is as follows. Involved in rRNA-processing at A0, A1 and A2 sites and negatively regulates telomerase. The polypeptide is Protein pxr1 (pxr1) (Aspergillus terreus (strain NIH 2624 / FGSC A1156)).